The following is a 448-amino-acid chain: Bifunctional protein GlmU (448 aa).

The segment at Met1–Arg232 is pyrophosphorylase. Residues Leu11–Gly14, Lys25, Gln78, and Gly83–Thr84 contribute to the UDP-N-acetyl-alpha-D-glucosamine site. Asp108 contacts Mg(2+). Residues Gly144, Glu158, Asn173, and Asn230 each coordinate UDP-N-acetyl-alpha-D-glucosamine. Asn230 is a Mg(2+) binding site. The segment at Leu233–Gly253 is linker. The interval Gly254–Val448 is N-acetyltransferase. Residues Arg319 and Lys337 each contribute to the UDP-N-acetyl-alpha-D-glucosamine site. Residue His349 is the Proton acceptor of the active site. Positions 352 and 363 each coordinate UDP-N-acetyl-alpha-D-glucosamine. Acetyl-CoA-binding positions include Ala366, Asn372–Tyr373, Ser409, and Arg426.

This sequence in the N-terminal section; belongs to the N-acetylglucosamine-1-phosphate uridyltransferase family. In the C-terminal section; belongs to the transferase hexapeptide repeat family. As to quaternary structure, homotrimer. Mg(2+) is required as a cofactor.

It localises to the cytoplasm. It catalyses the reaction alpha-D-glucosamine 1-phosphate + acetyl-CoA = N-acetyl-alpha-D-glucosamine 1-phosphate + CoA + H(+). The enzyme catalyses N-acetyl-alpha-D-glucosamine 1-phosphate + UTP + H(+) = UDP-N-acetyl-alpha-D-glucosamine + diphosphate. It participates in nucleotide-sugar biosynthesis; UDP-N-acetyl-alpha-D-glucosamine biosynthesis; N-acetyl-alpha-D-glucosamine 1-phosphate from alpha-D-glucosamine 6-phosphate (route II): step 2/2. It functions in the pathway nucleotide-sugar biosynthesis; UDP-N-acetyl-alpha-D-glucosamine biosynthesis; UDP-N-acetyl-alpha-D-glucosamine from N-acetyl-alpha-D-glucosamine 1-phosphate: step 1/1. The protein operates within bacterial outer membrane biogenesis; LPS lipid A biosynthesis. Catalyzes the last two sequential reactions in the de novo biosynthetic pathway for UDP-N-acetylglucosamine (UDP-GlcNAc). The C-terminal domain catalyzes the transfer of acetyl group from acetyl coenzyme A to glucosamine-1-phosphate (GlcN-1-P) to produce N-acetylglucosamine-1-phosphate (GlcNAc-1-P), which is converted into UDP-GlcNAc by the transfer of uridine 5-monophosphate (from uridine 5-triphosphate), a reaction catalyzed by the N-terminal domain. The polypeptide is Bifunctional protein GlmU (Azorhizobium caulinodans (strain ATCC 43989 / DSM 5975 / JCM 20966 / LMG 6465 / NBRC 14845 / NCIMB 13405 / ORS 571)).